We begin with the raw amino-acid sequence, 210 residues long: Uridine kinase (210 aa).

14–21 contacts ATP; the sequence is GGSGSGKT.

It belongs to the uridine kinase family.

Its subcellular location is the cytoplasm. It catalyses the reaction uridine + ATP = UMP + ADP + H(+). The enzyme catalyses cytidine + ATP = CMP + ADP + H(+). It participates in pyrimidine metabolism; CTP biosynthesis via salvage pathway; CTP from cytidine: step 1/3. It functions in the pathway pyrimidine metabolism; UMP biosynthesis via salvage pathway; UMP from uridine: step 1/1. The chain is Uridine kinase from Deinococcus radiodurans (strain ATCC 13939 / DSM 20539 / JCM 16871 / CCUG 27074 / LMG 4051 / NBRC 15346 / NCIMB 9279 / VKM B-1422 / R1).